A 332-amino-acid chain; its full sequence is Fructose-1,6-bisphosphatase class 1 (332 aa).

Residues glutamate 89, aspartate 110, leucine 112, and aspartate 113 each coordinate Mg(2+). Residues 113-116, asparagine 206, tyrosine 239, 257-259, and lysine 269 each bind substrate; these read DGSS and YLY. A Mg(2+)-binding site is contributed by glutamate 275.

Belongs to the FBPase class 1 family. Homotetramer. Mg(2+) serves as cofactor.

The protein localises to the cytoplasm. It carries out the reaction beta-D-fructose 1,6-bisphosphate + H2O = beta-D-fructose 6-phosphate + phosphate. It functions in the pathway carbohydrate biosynthesis; gluconeogenesis. In Escherichia coli (strain ATCC 8739 / DSM 1576 / NBRC 3972 / NCIMB 8545 / WDCM 00012 / Crooks), this protein is Fructose-1,6-bisphosphatase class 1.